Here is a 233-residue protein sequence, read N- to C-terminus: Uracil-DNA glycosylase (233 aa).

Residue Asp70 is the Proton acceptor of the active site.

It belongs to the uracil-DNA glycosylase (UDG) superfamily. UNG family.

The protein localises to the cytoplasm. It catalyses the reaction Hydrolyzes single-stranded DNA or mismatched double-stranded DNA and polynucleotides, releasing free uracil.. In terms of biological role, excises uracil residues from the DNA which can arise as a result of misincorporation of dUMP residues by DNA polymerase or due to deamination of cytosine. The chain is Uracil-DNA glycosylase from Helicobacter pylori (strain P12).